A 288-amino-acid chain; its full sequence is Protein shisa-2 (288 aa).

Positions 1-23 are cleaved as a signal peptide; sequence MWLEGSPLAVLAAVSFLLSVLAA. Over 24-110 the chain is Extracellular; it reads AQGSGEYCHG…DSTAVPIYVP (87 aa). The chain crosses the membrane as a helical span at residues 111–131; sequence FLIVGSVFVAFIIVGSLVAIC. Residues 132–288 lie on the Cytoplasmic side of the membrane; the sequence is CCRCLRPKQE…EQMMYPAVTV (157 aa). Residues 161 to 188 show a composition bias toward low complexity; it reads SSASTSRGSSSRQSSTAASSSSSANSGA. Residues 161-198 form a disordered region; the sequence is SSASTSRGSSSRQSSTAASSSSSANSGARPPPTRSQTN.

This sequence belongs to the shisa family. Interacts with fzd8 and fgfr1.

The protein localises to the endoplasmic reticulum membrane. Plays an essential role in the maturation of presomitic mesoderm cells by individual attenuation of both fgf and wnt signaling. Inhibits both wnt and fgf signaling through the regulation of protein maturation and cell surface transportation of their receptors within the endoplasmic reticulum. The protein is Protein shisa-2 (shisa2) of Xenopus laevis (African clawed frog).